Consider the following 285-residue polypeptide: Nucleotide-binding protein PFLU_0879 (285 aa).

8 to 15 is a binding site for ATP; sequence GRSGSGKS. Position 60–63 (60–63) interacts with GTP; that stretch reads DARN.

Belongs to the RapZ-like family.

Functionally, displays ATPase and GTPase activities. The sequence is that of Nucleotide-binding protein PFLU_0879 from Pseudomonas fluorescens (strain SBW25).